The sequence spans 264 residues: 3-dehydroquinate dehydratase (264 aa).

Residues Glu-50–Arg-52 and Arg-86 contribute to the 3-dehydroquinate site. The active-site Proton donor/acceptor is the His-148. Lys-175 acts as the Schiff-base intermediate with substrate in catalysis. 3 residues coordinate 3-dehydroquinate: Arg-217, Ser-236, and Gln-240.

This sequence belongs to the type-I 3-dehydroquinase family. As to quaternary structure, homodimer.

The catalysed reaction is 3-dehydroquinate = 3-dehydroshikimate + H2O. The protein operates within metabolic intermediate biosynthesis; chorismate biosynthesis; chorismate from D-erythrose 4-phosphate and phosphoenolpyruvate: step 3/7. Involved in the third step of the chorismate pathway, which leads to the biosynthesis of aromatic amino acids. Catalyzes the cis-dehydration of 3-dehydroquinate (DHQ) and introduces the first double bond of the aromatic ring to yield 3-dehydroshikimate. This chain is 3-dehydroquinate dehydratase, found in Albidiferax ferrireducens (strain ATCC BAA-621 / DSM 15236 / T118) (Rhodoferax ferrireducens).